Here is a 184-residue protein sequence, read N- to C-terminus: Peptide deformylase 2 (184 aa).

Positions 110 and 153 each coordinate Fe cation. The active site involves E154. H157 contacts Fe cation.

The protein belongs to the polypeptide deformylase family. The cofactor is Fe(2+).

The enzyme catalyses N-terminal N-formyl-L-methionyl-[peptide] + H2O = N-terminal L-methionyl-[peptide] + formate. Its function is as follows. Removes the formyl group from the N-terminal Met of newly synthesized proteins. Requires at least a dipeptide for an efficient rate of reaction. N-terminal L-methionine is a prerequisite for activity but the enzyme has broad specificity at other positions. The polypeptide is Peptide deformylase 2 (defB) (Bacillus subtilis (strain 168)).